The primary structure comprises 300 residues: 4-diphosphocytidyl-2-C-methyl-D-erythritol kinase (300 aa).

Residue lysine 17 is part of the active site. 102-112 (PVAAGIGGGSA) is a binding site for ATP. Aspartate 144 is an active-site residue.

Belongs to the GHMP kinase family. IspE subfamily.

It carries out the reaction 4-CDP-2-C-methyl-D-erythritol + ATP = 4-CDP-2-C-methyl-D-erythritol 2-phosphate + ADP + H(+). It participates in isoprenoid biosynthesis; isopentenyl diphosphate biosynthesis via DXP pathway; isopentenyl diphosphate from 1-deoxy-D-xylulose 5-phosphate: step 3/6. Functionally, catalyzes the phosphorylation of the position 2 hydroxy group of 4-diphosphocytidyl-2C-methyl-D-erythritol. This Bradyrhizobium sp. (strain ORS 278) protein is 4-diphosphocytidyl-2-C-methyl-D-erythritol kinase.